We begin with the raw amino-acid sequence, 172 residues long: Large ribosomal subunit protein uL5 (172 aa).

This sequence belongs to the universal ribosomal protein uL5 family. As to quaternary structure, part of the 50S ribosomal subunit; contacts the 5S rRNA and probably tRNA. Forms a bridge to the 30S subunit in the 70S ribosome.

Its function is as follows. This is one of the proteins that bind and probably mediate the attachment of the 5S RNA into the large ribosomal subunit, where it forms part of the central protuberance. In the 70S ribosome it contacts protein S13 of the 30S subunit (bridge B1b), connecting the 2 subunits; this bridge is implicated in subunit movement. May contact the P site tRNA; the 5S rRNA and some of its associated proteins might help stabilize positioning of ribosome-bound tRNAs. This chain is Large ribosomal subunit protein uL5, found in Haloferax mediterranei (strain ATCC 33500 / DSM 1411 / JCM 8866 / NBRC 14739 / NCIMB 2177 / R-4) (Halobacterium mediterranei).